Consider the following 307-residue polypeptide: MSQRVKKLTGLVAATFTPLTAEGEINLSVIAAYVDYLIEKQNVKSVFVNGTTGEGCSLTVDERKHLAAAWCQHGKGKLEQLIVHVGCMSIKDSQELARHAASIGADGISVISPSYFKPINADALRLFIKEVSASAPDLPMYYYHLPGMTGVALEAADVLNGIEREIPSFQGVKYSGTDLRDLGQCVCYSQSRDWSVLYGVDEQLLGALVLGVHGAVGSTYNYLGHIVNQMLSAFNNGNHTQTRDLQFGFMEVITFARTLGFDVSVNKQVMSEVSGLPMGPPRLPLLPCPVSKAQAIAQKIHNFTQGL.

2 residues coordinate aceneuramate: T51 and T52. The Proton donor role is filled by Y143. K173 acts as the Schiff-base intermediate with substrate in catalysis. Positions 175, 199, 201, 202, and 218 each coordinate aceneuramate.

Belongs to the DapA family. NanA subfamily. Homotetramer.

Its subcellular location is the cytoplasm. The catalysed reaction is aceneuramate = aldehydo-N-acetyl-D-mannosamine + pyruvate. It participates in amino-sugar metabolism; N-acetylneuraminate degradation. Functionally, catalyzes the cleavage of N-acetylneuraminic acid (sialic acid) to form pyruvate and N-acetylmannosamine via a Schiff base intermediate. It prevents sialic acids from being recycled and returning to the cell surface. Involved in the N-glycolylneuraminic acid (Neu5Gc) degradation pathway. The sequence is that of N-acetylneuraminate lyase from Danio rerio (Zebrafish).